The chain runs to 202 residues: Precorrin-2 dehydrogenase (202 aa).

Residues 20–21 (TI) and 41–42 (PT) contribute to the NAD(+) site.

Belongs to the precorrin-2 dehydrogenase / sirohydrochlorin ferrochelatase family. In terms of assembly, homodimer.

The enzyme catalyses precorrin-2 + NAD(+) = sirohydrochlorin + NADH + 2 H(+). The protein operates within cofactor biosynthesis; adenosylcobalamin biosynthesis; sirohydrochlorin from precorrin-2: step 1/1. It participates in porphyrin-containing compound metabolism; siroheme biosynthesis; sirohydrochlorin from precorrin-2: step 1/1. In terms of biological role, catalyzes the dehydrogenation of precorrin-2 to form sirohydrochlorin which is used as a precursor in both siroheme biosynthesis and in the anaerobic branch of adenosylcobalamin biosynthesis. It is unable to oxidize precorrin-3. The polypeptide is Precorrin-2 dehydrogenase (sirC) (Priestia megaterium (Bacillus megaterium)).